Reading from the N-terminus, the 351-residue chain is UDP-3-O-acylglucosamine N-acyltransferase (351 aa).

Residue H240 is the Proton acceptor of the active site.

The protein belongs to the transferase hexapeptide repeat family. LpxD subfamily. In terms of assembly, homotrimer.

It carries out the reaction a UDP-3-O-[(3R)-3-hydroxyacyl]-alpha-D-glucosamine + a (3R)-hydroxyacyl-[ACP] = a UDP-2-N,3-O-bis[(3R)-3-hydroxyacyl]-alpha-D-glucosamine + holo-[ACP] + H(+). It functions in the pathway bacterial outer membrane biogenesis; LPS lipid A biosynthesis. Its function is as follows. Catalyzes the N-acylation of UDP-3-O-acylglucosamine using 3-hydroxyacyl-ACP as the acyl donor. Is involved in the biosynthesis of lipid A, a phosphorylated glycolipid that anchors the lipopolysaccharide to the outer membrane of the cell. The sequence is that of UDP-3-O-acylglucosamine N-acyltransferase from Methylacidiphilum infernorum (isolate V4) (Methylokorus infernorum (strain V4)).